The sequence spans 264 residues: uncharacterized protein (264 aa).

The chain crosses the membrane as a helical span at residues 9 to 29; that stretch reads LVISILSLIATLSISFNIYFI.

It is found in the membrane. This is an uncharacterized protein from Ureaplasma parvum serovar 3 (strain ATCC 700970).